A 1206-amino-acid chain; its full sequence is DNA-directed RNA polymerase subunit beta' (1206 aa).

Zn(2+) is bound by residues Cys-60, Cys-62, Cys-75, and Cys-78. 3 residues coordinate Mg(2+): Asp-449, Asp-451, and Asp-453. Residues Cys-818, Cys-892, Cys-899, and Cys-902 each contribute to the Zn(2+) site.

It belongs to the RNA polymerase beta' chain family. In terms of assembly, the RNAP catalytic core consists of 2 alpha, 1 beta, 1 beta' and 1 omega subunit. When a sigma factor is associated with the core the holoenzyme is formed, which can initiate transcription. It depends on Mg(2+) as a cofactor. The cofactor is Zn(2+).

It carries out the reaction RNA(n) + a ribonucleoside 5'-triphosphate = RNA(n+1) + diphosphate. Functionally, DNA-dependent RNA polymerase catalyzes the transcription of DNA into RNA using the four ribonucleoside triphosphates as substrates. The protein is DNA-directed RNA polymerase subunit beta' of Shouchella clausii (strain KSM-K16) (Alkalihalobacillus clausii).